A 75-amino-acid chain; its full sequence is Small ribosomal subunit protein bS18 (75 aa).

At alanine 2 the chain carries N-acetylalanine.

It belongs to the bacterial ribosomal protein bS18 family. As to quaternary structure, part of the 30S ribosomal subunit. Forms a tight heterodimer with protein bS6.

Functionally, binds as a heterodimer with protein bS6 to the central domain of the 16S rRNA, where it helps stabilize the platform of the 30S subunit. The sequence is that of Small ribosomal subunit protein bS18 (rpsR) from Salmonella typhimurium (strain LT2 / SGSC1412 / ATCC 700720).